A 257-amino-acid polypeptide reads, in one-letter code: Hydroxyacylglutathione hydrolase (257 aa).

Zn(2+)-binding residues include His-54, His-56, Asp-58, His-59, His-113, Asp-137, and His-175.

This sequence belongs to the metallo-beta-lactamase superfamily. Glyoxalase II family. Monomer. Zn(2+) is required as a cofactor.

The catalysed reaction is an S-(2-hydroxyacyl)glutathione + H2O = a 2-hydroxy carboxylate + glutathione + H(+). It functions in the pathway secondary metabolite metabolism; methylglyoxal degradation; (R)-lactate from methylglyoxal: step 2/2. Thiolesterase that catalyzes the hydrolysis of S-D-lactoyl-glutathione to form glutathione and D-lactic acid. This Acaryochloris marina (strain MBIC 11017) protein is Hydroxyacylglutathione hydrolase.